Here is a 410-residue protein sequence, read N- to C-terminus: Argininosuccinate synthase (410 aa).

Residues 14–22 and Ala-41 each bind ATP; that span reads AYSGGLDTS. Residues Tyr-92 and Ser-97 each contribute to the L-citrulline site. An ATP-binding site is contributed by Gly-122. Residues Thr-124, Asn-128, and Asp-129 each coordinate L-aspartate. Asn-128 is an L-citrulline binding site. Residues Arg-132, Ser-183, Ser-192, Glu-268, and Tyr-280 each contribute to the L-citrulline site.

It belongs to the argininosuccinate synthase family. Type 1 subfamily. As to quaternary structure, homotetramer.

Its subcellular location is the cytoplasm. The catalysed reaction is L-citrulline + L-aspartate + ATP = 2-(N(omega)-L-arginino)succinate + AMP + diphosphate + H(+). It functions in the pathway amino-acid biosynthesis; L-arginine biosynthesis; L-arginine from L-ornithine and carbamoyl phosphate: step 2/3. The sequence is that of Argininosuccinate synthase from Parvibaculum lavamentivorans (strain DS-1 / DSM 13023 / NCIMB 13966).